The sequence spans 220 residues: Ribose-5-phosphate isomerase A (220 aa).

Residues 28–31 (TGST), 81–84 (DGAD), and 94–97 (KGGG) contribute to the substrate site. Glu103 (proton acceptor) is an active-site residue. Lys121 lines the substrate pocket.

This sequence belongs to the ribose 5-phosphate isomerase family. Homodimer.

It carries out the reaction aldehydo-D-ribose 5-phosphate = D-ribulose 5-phosphate. It participates in carbohydrate degradation; pentose phosphate pathway; D-ribose 5-phosphate from D-ribulose 5-phosphate (non-oxidative stage): step 1/1. Its function is as follows. Catalyzes the reversible conversion of ribose-5-phosphate to ribulose 5-phosphate. This is Ribose-5-phosphate isomerase A from Coxiella burnetii (strain CbuK_Q154) (Coxiella burnetii (strain Q154)).